We begin with the raw amino-acid sequence, 119 residues long: Methylglyoxal synthase (119 aa).

An MGS-like domain is found at 1 to 119; it reads MKIALIAHDK…ESAKLIMADI (119 aa). Substrate is bound by residues histidine 8, lysine 12, 34 to 37, and 54 to 55; these read TGTT and SG. Residue aspartate 60 is the Proton donor/acceptor of the active site. Histidine 87 is a binding site for substrate.

This sequence belongs to the methylglyoxal synthase family.

It carries out the reaction dihydroxyacetone phosphate = methylglyoxal + phosphate. In terms of biological role, catalyzes the formation of methylglyoxal from dihydroxyacetone phosphate. This Clostridium perfringens (strain 13 / Type A) protein is Methylglyoxal synthase.